A 167-amino-acid polypeptide reads, in one-letter code: Cytochrome c-type biogenesis protein CcmE (167 aa).

At 1-7 the chain is on the cytoplasmic side; the sequence is MTRKQRR. A helical; Signal-anchor for type II membrane protein membrane pass occupies residues 8–28; the sequence is LLMIGGAGVVLIVAVGLVLNA. Over 29 to 167 the chain is Periplasmic; sequence LRDSIVFFST…TSANAAEGGK (139 aa). Heme contacts are provided by histidine 122 and tyrosine 126. Over residues 137–150 the composition is skewed to basic and acidic residues; it reads KDGHWKDDYGKKSP. The tract at residues 137–167 is disordered; it reads KDGHWKDDYGKKSPGETTAGQTSANAAEGGK. Residues 151–161 show a composition bias toward polar residues; it reads GETTAGQTSAN.

Belongs to the CcmE/CycJ family.

It localises to the cell inner membrane. Its function is as follows. Heme chaperone required for the biogenesis of c-type cytochromes. Transiently binds heme delivered by CcmC and transfers the heme to apo-cytochromes in a process facilitated by CcmF and CcmH. In Rhodopseudomonas palustris (strain ATCC BAA-98 / CGA009), this protein is Cytochrome c-type biogenesis protein CcmE.